Reading from the N-terminus, the 190-residue chain is Ras-related protein RabF1 (190 aa).

15 to 22 (GDSGVGKT) is a binding site for GTP. An Effector region motif is present at residues 37–44 (HITIGIEF). GTP is bound by residues 62–66 (DTAGE) and 119–122 (NKND). Position 187 is a cysteine methyl ester (Cys187). A lipid anchor (S-geranylgeranyl cysteine) is attached at Cys187. Positions 188 to 190 (IIN) are cleaved as a propeptide — removed in mature form.

The protein belongs to the small GTPase superfamily. Rab family.

Its subcellular location is the cell membrane. The polypeptide is Ras-related protein RabF1 (rabF1-1) (Dictyostelium discoideum (Social amoeba)).